The sequence spans 493 residues: Involucrin (493 aa).

3 disordered regions span residues 1–47 (MSQQ…CQKV), 60–123 (EEKH…GQLE), and 139–493 (KRDE…GQHE). Low complexity predominate over residues 76 to 89 (EQQQPQEQELQQQH). Basic and acidic residues-rich tracts occupy residues 90-116 (WEQDKEHQKAENPEQQLKQEKVQREKQ), 139-151 (KRDEQLGTKKEQL), 161-174 (QLKHLEQEEGHLEL), 184-193 (NLEHQEKPLE), and 201-213 (QLKHLEQQEKPLE). Residues 228-240 (QEGQSELPEQQRG) are compositionally biased toward polar residues. Basic and acidic residues-rich tracts occupy residues 250–270 (GQLKHLEEQKGQLKHLEHEEG), 282–360 (KHLE…HEGQ), 372–386 (KHLEQEEKQLEHPEQ), 411–431 (KHLEQQEKQLEHPQQQEEQLK), and 439–450 (QLKDLEQQERQL). The segment covering 473-493 (GEVLLPVEQQQQKQEVQGQHE) has biased composition (low complexity).

It belongs to the involucrin family. In terms of assembly, directly or indirectly cross-linked to cornifelin (CNFN). Post-translationally, substrate of transglutaminase. Specific glutamines or lysines are cross-linked to keratins, desmoplakin and to inter involucrin molecules. Keratinocytes of epidermis and other stratified squamous epithelia.

It localises to the cytoplasm. In terms of biological role, part of the insoluble cornified cell envelope (CE) of stratified squamous epithelia. In Saguinus oedipus (Cotton-top tamarin), this protein is Involucrin (IVL).